Consider the following 43-residue polypeptide: Cytochrome b559 subunit beta (43 aa).

A helical transmembrane segment spans residues 18–34 (WLAIHGLAIPTVFFLGG). Heme is bound at residue His22.

It belongs to the PsbE/PsbF family. Heterodimer of an alpha subunit and a beta subunit. PSII is composed of 1 copy each of membrane proteins PsbA, PsbB, PsbC, PsbD, PsbE, PsbF, PsbH, PsbI, PsbJ, PsbK, PsbL, PsbM, PsbT, PsbX, PsbY, PsbZ, Psb30/Ycf12, at least 3 peripheral proteins of the oxygen-evolving complex and a large number of cofactors. It forms dimeric complexes. The cofactor is heme b.

Its subcellular location is the plastid. The protein resides in the chloroplast thylakoid membrane. This b-type cytochrome is tightly associated with the reaction center of photosystem II (PSII). PSII is a light-driven water:plastoquinone oxidoreductase that uses light energy to abstract electrons from H(2)O, generating O(2) and a proton gradient subsequently used for ATP formation. It consists of a core antenna complex that captures photons, and an electron transfer chain that converts photonic excitation into a charge separation. This chain is Cytochrome b559 subunit beta, found in Trieres chinensis (Marine centric diatom).